A 1307-amino-acid chain; its full sequence is Rho1 guanine nucleotide exchange factor TUS1 (1307 aa).

A compositionally biased stretch (polar residues) spans 1–10 (MYRYNRSSPF). Disordered regions lie at residues 1–144 (MYRY…FIGN), 164–194 (PFAN…SDLR), and 219–239 (EDSE…NVSG). A compositionally biased stretch (basic and acidic residues) spans 12 to 29 (RTPEKRVSRQESQRKSIE). Positions 37–79 (NTRNSFLDDSDNGTDNISIGWTPISDTQQFQSPVPQAFTFTSK) are enriched in polar residues. The span at 87–97 (TSSSESTPKST) shows a compositional bias: low complexity. Residues 176–194 (SPRDSSKQQAHFSDESDLR) are compositionally biased toward basic and acidic residues. Residues 467 to 657 (QRQSFIFDLI…EKLNFEVNQV (191 aa)) form the DH domain. Residues 715–877 (KLVLSGTVYK…WIDAIMESFK (163 aa)) enclose the PH domain. A disordered region spans residues 780–802 (TSKQPLRNYSQKEHKSPMHNFST). In terms of domain architecture, CNH spans 938 to 1279 (TTRILCCEDV…KLASSERREK (342 aa)).

Interacts with RHO1.

In terms of biological role, guanine nucleotide-exchange factor (GEF) for RHO1 that stimulates the exchange of RHO1 GDP-bound form into GTP-bound form. Required for signaling of cell wall defects to RHO1. This is Rho1 guanine nucleotide exchange factor TUS1 (TUS1) from Saccharomyces cerevisiae (strain ATCC 204508 / S288c) (Baker's yeast).